The primary structure comprises 502 residues: Probable cytosol aminopeptidase (502 aa).

Mn(2+) is bound by residues Lys-270 and Asp-275. Lys-282 is an active-site residue. Residues Asp-293, Asp-352, and Glu-354 each coordinate Mn(2+). Residue Arg-356 is part of the active site.

Belongs to the peptidase M17 family. Mn(2+) serves as cofactor.

It is found in the cytoplasm. It catalyses the reaction Release of an N-terminal amino acid, Xaa-|-Yaa-, in which Xaa is preferably Leu, but may be other amino acids including Pro although not Arg or Lys, and Yaa may be Pro. Amino acid amides and methyl esters are also readily hydrolyzed, but rates on arylamides are exceedingly low.. The enzyme catalyses Release of an N-terminal amino acid, preferentially leucine, but not glutamic or aspartic acids.. Its function is as follows. Presumably involved in the processing and regular turnover of intracellular proteins. Catalyzes the removal of unsubstituted N-terminal amino acids from various peptides. This chain is Probable cytosol aminopeptidase, found in Buchnera aphidicola subsp. Schizaphis graminum (strain Sg).